The following is an 804-amino-acid chain: Leucine--tRNA ligase (804 aa).

The short motif at proline 40–histidine 51 is the 'HIGH' region element. Residues lysine 576–serine 580 carry the 'KMSKS' region motif. Lysine 579 contributes to the ATP binding site.

The protein belongs to the class-I aminoacyl-tRNA synthetase family.

It is found in the cytoplasm. The catalysed reaction is tRNA(Leu) + L-leucine + ATP = L-leucyl-tRNA(Leu) + AMP + diphosphate. This chain is Leucine--tRNA ligase, found in Bacillus licheniformis (strain ATCC 14580 / DSM 13 / JCM 2505 / CCUG 7422 / NBRC 12200 / NCIMB 9375 / NCTC 10341 / NRRL NRS-1264 / Gibson 46).